A 603-amino-acid polypeptide reads, in one-letter code: Phosphoenolpyruvate carboxykinase [GTP] (603 aa).

Substrate-binding positions include R87 and Y209–G211. Mn(2+)-binding residues include K218 and H237. S258 is a binding site for substrate. Residue G259 to S264 participates in GTP binding. S260 is an active-site residue. D275 contributes to the Mn(2+) binding site. Residue N365 to R367 participates in substrate binding. Positions 367 and 398 each coordinate GTP.

The protein belongs to the phosphoenolpyruvate carboxykinase [GTP] family. Mn(2+) serves as cofactor.

It localises to the cytoplasm. It carries out the reaction oxaloacetate + GTP = phosphoenolpyruvate + GDP + CO2. It functions in the pathway carbohydrate biosynthesis; gluconeogenesis. In terms of biological role, catalyzes the conversion of oxaloacetate (OAA) to phosphoenolpyruvate (PEP), the rate-limiting step in the metabolic pathway that produces glucose from lactate and other precursors derived from the citric acid cycle. The polypeptide is Phosphoenolpyruvate carboxykinase [GTP] (Saccharolobus solfataricus (strain ATCC 35092 / DSM 1617 / JCM 11322 / P2) (Sulfolobus solfataricus)).